A 450-amino-acid polypeptide reads, in one-letter code: Chromosomal replication initiator protein DnaA (450 aa).

The interval methionine 1 to aspartate 79 is domain I, interacts with DnaA modulators. The domain II stretch occupies residues aspartate 79–tyrosine 112. The tract at residues glutamine 113–alanine 329 is domain III, AAA+ region. ATP contacts are provided by glycine 157, glycine 159, lysine 160, and threonine 161. The domain IV, binds dsDNA stretch occupies residues arginine 330–serine 450.

It belongs to the DnaA family. In terms of assembly, oligomerizes as a right-handed, spiral filament on DNA at oriC.

It is found in the cytoplasm. Functionally, plays an essential role in the initiation and regulation of chromosomal replication. ATP-DnaA binds to the origin of replication (oriC) to initiate formation of the DNA replication initiation complex once per cell cycle. Binds the DnaA box (a 9 base pair repeat at the origin) and separates the double-stranded (ds)DNA. Forms a right-handed helical filament on oriC DNA; dsDNA binds to the exterior of the filament while single-stranded (ss)DNA is stabiized in the filament's interior. The ATP-DnaA-oriC complex binds and stabilizes one strand of the AT-rich DNA unwinding element (DUE), permitting loading of DNA polymerase. After initiation quickly degrades to an ADP-DnaA complex that is not apt for DNA replication. Binds acidic phospholipids. The chain is Chromosomal replication initiator protein DnaA from Oenococcus oeni (strain ATCC BAA-331 / PSU-1).